Here is a 173-residue protein sequence, read N- to C-terminus: Transcription factor E (173 aa).

The HTH TFE/IIEalpha-type domain maps to 6–89; the sequence is PLEELLEFVR…YWYVDRETLN (84 aa).

Belongs to the TFE family. Monomer. Interaction with RNA polymerase subunits RpoF and RpoE is necessary for Tfe stimulatory transcription activity. Able to interact with Tbp and RNA polymerase in the absence of DNA promoter. Interacts both with the preinitiation and elongation complexes.

Its function is as follows. Transcription factor that plays a role in the activation of archaeal genes transcribed by RNA polymerase. Facilitates transcription initiation by enhancing TATA-box recognition by TATA-box-binding protein (Tbp), and transcription factor B (Tfb) and RNA polymerase recruitment. Not absolutely required for transcription in vitro, but particularly important in cases where Tbp or Tfb function is not optimal. It dynamically alters the nucleic acid-binding properties of RNA polymerases by stabilizing the initiation complex and destabilizing elongation complexes. Seems to translocate with the RNA polymerase following initiation and acts by binding to the non template strand of the transcription bubble in elongation complexes. This Ignicoccus hospitalis (strain KIN4/I / DSM 18386 / JCM 14125) protein is Transcription factor E.